We begin with the raw amino-acid sequence, 180 residues long: ATP synthase subunit b, plastid (180 aa).

The helical transmembrane segment at 27–49 (LVTTLINIAVVLSLLIVFGKGFL) threads the bilayer.

It belongs to the ATPase B chain family. In terms of assembly, F-type ATPases have 2 components, F(1) - the catalytic core - and F(0) - the membrane proton channel. F(1) has five subunits: alpha(3), beta(3), gamma(1), delta(1), epsilon(1). F(0) has four main subunits: a(1), b(1), b'(1) and c(10-14). The alpha and beta chains form an alternating ring which encloses part of the gamma chain. F(1) is attached to F(0) by a central stalk formed by the gamma and epsilon chains, while a peripheral stalk is formed by the delta, b and b' chains.

It localises to the plastid membrane. F(1)F(0) ATP synthase produces ATP from ADP in the presence of a proton or sodium gradient. F-type ATPases consist of two structural domains, F(1) containing the extramembraneous catalytic core and F(0) containing the membrane proton channel, linked together by a central stalk and a peripheral stalk. During catalysis, ATP synthesis in the catalytic domain of F(1) is coupled via a rotary mechanism of the central stalk subunits to proton translocation. Its function is as follows. Component of the F(0) channel, it forms part of the peripheral stalk, linking F(1) to F(0). The sequence is that of ATP synthase subunit b, plastid from Cuscuta gronovii (Common dodder).